The sequence spans 444 residues: C4-dicarboxylate transport protein 1 (444 aa).

9 consecutive transmembrane segments (helical) span residues 9-29 (SIFL…VGIP), 42-62 (FIKL…VNGI), 78-98 (SVIY…VVAY), 152-172 (ILQV…VGEQ), 190-210 (IMGM…AFTT), 221-241 (LGAL…AVLG), 307-327 (FSIY…TPLA), 354-374 (VILA…LVLV), and 380-400 (FMGI…TVTI).

The protein belongs to the dicarboxylate/amino acid:cation symporter (DAACS) (TC 2.A.23) family.

The protein resides in the cell inner membrane. Responsible for the transport of dicarboxylates such as succinate, fumarate, and malate from the periplasm across the membrane. The chain is C4-dicarboxylate transport protein 1 from Pseudomonas paraeruginosa (strain DSM 24068 / PA7) (Pseudomonas aeruginosa (strain PA7)).